Reading from the N-terminus, the 198-residue chain is Guanylate kinase (198 aa).

The region spanning 4–186 (PRPVVLSGPS…AYATLKQALS (183 aa)) is the Guanylate kinase-like domain. An ATP-binding site is contributed by 14-19 (GAGKST). 37 to 51 (SHTTRNPRPGEEDGK) contributes to the substrate binding site. Active-site residues include Arg-44, Arg-137, and Arg-148. 171 to 172 (ND) lines the ATP pocket.

The protein belongs to the guanylate kinase family. In terms of assembly, monomer. Interacts with RD3. Widely expressed. In retina is expressed in inner segment, outer nuclear layer, outer plexiform layer, inner plexiform layer, and ganglion cell layer (at protein level).

It localises to the photoreceptor inner segment. Its subcellular location is the cytoplasm. It is found in the cytosol. The protein localises to the mitochondrion. It catalyses the reaction GMP + ATP = GDP + ADP. Its function is as follows. Catalyzes the phosphorylation of GMP to GDP. Essential enzyme for recycling GMP and indirectly, cyclic GMP (cGMP). Involved in the cGMP metabolism in photoreceptors. The chain is Guanylate kinase from Mus musculus (Mouse).